The primary structure comprises 325 residues: Acetyl-coenzyme A carboxylase carboxyl transferase subunit alpha (325 aa).

The CoA carboxyltransferase C-terminal domain occupies 38-292; the sequence is RLEDRLAKLQ…DETLKQSLKT (255 aa).

Belongs to the AccA family. As to quaternary structure, acetyl-CoA carboxylase is a heterohexamer composed of biotin carboxyl carrier protein (AccB), biotin carboxylase (AccC) and two subunits each of ACCase subunit alpha (AccA) and ACCase subunit beta (AccD).

It is found in the cytoplasm. It catalyses the reaction N(6)-carboxybiotinyl-L-lysyl-[protein] + acetyl-CoA = N(6)-biotinyl-L-lysyl-[protein] + malonyl-CoA. It participates in lipid metabolism; malonyl-CoA biosynthesis; malonyl-CoA from acetyl-CoA: step 1/1. Inhibited by pyrrolidine dione antibiotics moiramide B (CPD1) and CPD2. Its function is as follows. Component of the acetyl coenzyme A carboxylase (ACC) complex. First, biotin carboxylase catalyzes the carboxylation of biotin on its carrier protein (BCCP) and then the CO(2) group is transferred by the carboxyltransferase to acetyl-CoA to form malonyl-CoA. This Bacillus subtilis (strain 168) protein is Acetyl-coenzyme A carboxylase carboxyl transferase subunit alpha.